Reading from the N-terminus, the 148-residue chain is Oleosin 1 (148 aa).

Ala2 is subject to N-acetylalanine. Positions 2–28 are polar; it reads ADQHFQQPLHFQGSYGQQQPRSYQVAK. A hydrophobic region spans residues 29-148; the sequence is AATAVTAGGS…HVPSGQQQSS (120 aa). 2 consecutive transmembrane segments (helical) span residues 37-57 and 81-101; these read GSLL…LTIA and GFLT…WIYK.

This sequence belongs to the oleosin family.

Its subcellular location is the lipid droplet. The protein localises to the membrane. In terms of biological role, may have a structural role to stabilize the lipid body during desiccation of the seed by preventing coalescence of the oil. Probably interacts with both lipid and phospholipid moieties of lipid bodies. May also provide recognition signals for specific lipase anchorage in lipolysis during seedling growth. The protein is Oleosin 1 (OLE1) of Prunus dulcis (Almond).